A 213-amino-acid chain; its full sequence is FMN-dependent NADH:quinone oxidoreductase (213 aa).

17-19 (SSS) contributes to the FMN binding site.

Belongs to the azoreductase type 1 family. Homodimer. FMN is required as a cofactor.

The catalysed reaction is 2 a quinone + NADH + H(+) = 2 a 1,4-benzosemiquinone + NAD(+). The enzyme catalyses N,N-dimethyl-1,4-phenylenediamine + anthranilate + 2 NAD(+) = 2-(4-dimethylaminophenyl)diazenylbenzoate + 2 NADH + 2 H(+). Functionally, quinone reductase that provides resistance to thiol-specific stress caused by electrophilic quinones. Its function is as follows. Also exhibits azoreductase activity. Catalyzes the reductive cleavage of the azo bond in aromatic azo compounds to the corresponding amines. The polypeptide is FMN-dependent NADH:quinone oxidoreductase (Ruminiclostridium cellulolyticum (strain ATCC 35319 / DSM 5812 / JCM 6584 / H10) (Clostridium cellulolyticum)).